The primary structure comprises 260 residues: Putative ABC transporter ATP-binding protein PF0068 (260 aa).

An ABC transporter domain is found at 2-234 (IEVKGVWFWY…DLKRYKLEEP (233 aa)). ATP is bound at residue 34–41 (GPNGSGKT).

Belongs to the ABC transporter superfamily.

The protein localises to the cell membrane. Functionally, probably part of an ABC transporter complex. Responsible for energy coupling to the transport system. This chain is Putative ABC transporter ATP-binding protein PF0068, found in Pyrococcus furiosus (strain ATCC 43587 / DSM 3638 / JCM 8422 / Vc1).